A 366-amino-acid polypeptide reads, in one-letter code: tRNA/tmRNA (uracil-C(5))-methyltransferase (366 aa).

The S-adenosyl-L-methionine site is built by Gln190, Tyr218, Asn223, Glu239, and Asp299. Catalysis depends on Cys324, which acts as the Nucleophile. Glu358 (proton acceptor) is an active-site residue.

Belongs to the class I-like SAM-binding methyltransferase superfamily. RNA M5U methyltransferase family. TrmA subfamily.

It carries out the reaction uridine(54) in tRNA + S-adenosyl-L-methionine = 5-methyluridine(54) in tRNA + S-adenosyl-L-homocysteine + H(+). The enzyme catalyses uridine(341) in tmRNA + S-adenosyl-L-methionine = 5-methyluridine(341) in tmRNA + S-adenosyl-L-homocysteine + H(+). Dual-specificity methyltransferase that catalyzes the formation of 5-methyluridine at position 54 (m5U54) in all tRNAs, and that of position 341 (m5U341) in tmRNA (transfer-mRNA). The protein is tRNA/tmRNA (uracil-C(5))-methyltransferase of Escherichia coli O157:H7 (strain EC4115 / EHEC).